Consider the following 435-residue polypeptide: Cytidine monophosphate-N-acetylneuraminic acid hydroxylase (435 aa).

Belongs to the CMP-Neu5Ac hydroxylase family. Requires [2Fe-2S] cluster as cofactor.

Its subcellular location is the cytoplasm. The enzyme catalyses CMP-N-acetyl-beta-neuraminate + 2 Fe(II)-[cytochrome b5] + O2 + 2 H(+) = CMP-N-glycoloyl-beta-neuraminate + 2 Fe(III)-[cytochrome b5] + H2O. Its pathway is amino-sugar metabolism; N-acetylneuraminate metabolism. In terms of biological role, sialic acids are components of carbohydrate chains of glycoconjugates and are involved in cell-cell recognition and cell-pathogen interactions. Catalyzes the conversion of CMP-N-acetylneuraminic acid (CMP-Neu5Ac) into its hydroxylated derivative CMP-N-glycolylneuraminic acid (CMP-Neu5Gc), a sialic acid abundantly expressed at the surface of many cells. This Sus scrofa (Pig) protein is Cytidine monophosphate-N-acetylneuraminic acid hydroxylase.